A 40-amino-acid chain; its full sequence is Photosystem II reaction center protein J (40 aa).

Residues 8 to 28 form a helical membrane-spanning segment; the sequence is IPLWLIGTLTGILVIGLIGIF.

The protein belongs to the PsbJ family. In terms of assembly, PSII is composed of 1 copy each of membrane proteins PsbA, PsbB, PsbC, PsbD, PsbE, PsbF, PsbH, PsbI, PsbJ, PsbK, PsbL, PsbM, PsbT, PsbX, PsbY, PsbZ, Psb30/Ycf12, at least 3 peripheral proteins of the oxygen-evolving complex and a large number of cofactors. It forms dimeric complexes.

It localises to the plastid. It is found in the chloroplast thylakoid membrane. Its function is as follows. One of the components of the core complex of photosystem II (PSII). PSII is a light-driven water:plastoquinone oxidoreductase that uses light energy to abstract electrons from H(2)O, generating O(2) and a proton gradient subsequently used for ATP formation. It consists of a core antenna complex that captures photons, and an electron transfer chain that converts photonic excitation into a charge separation. This is Photosystem II reaction center protein J from Phalaenopsis aphrodite subsp. formosana (Moth orchid).